A 163-amino-acid polypeptide reads, in one-letter code: Cytosolic iron-sulfur assembly component 2B (163 aa).

Belongs to the MIP18 family. As to quaternary structure, component of the CIA complex. Component of the MMXD complex, which includes CIAO1, ERCC2, CIAO2B, MMS19 and SLC25A5. Interacts with CIAO1, ERCC2 and MMS19; the interactions are direct. Interacts with KIF4A; the interaction facilitates the transfer of Fe-S clusters to KIF4A to ensure proper localization of KIF4A to the mitotic machinery. Interacts with CCDC117; the interaction is direct.

It localises to the nucleus. The protein resides in the cytoplasm. It is found in the cytoskeleton. The protein localises to the spindle. In terms of biological role, component of the cytosolic iron-sulfur protein assembly (CIA) complex, a multiprotein complex that mediates the incorporation of iron-sulfur cluster into extramitochondrial Fe/S proteins. As a CIA complex component and in collaboration with CIAO1 and MMS19, binds to and facilitates the assembly of most cytosolic-nuclear Fe/S proteins. As part of the mitotic spindle-associated MMXD complex it plays a role in chromosome segregation, probably by facilitating iron-sulfur cluster assembly into ERCC2/XPD. Together with MMS19, facilitates the transfer of Fe-S clusters to the motor protein KIF4A, which ensures proper localization of KIF4A to mitotic machinery components to promote the progression of mitosis. The chain is Cytosolic iron-sulfur assembly component 2B from Mus musculus (Mouse).